The following is a 152-amino-acid chain: Interleukin-2 (152 aa).

Residues 1-20 form the signal peptide; sequence MYRMQLLSCIALTLALVANG. O-linked (GalNAc...) threonine glycosylation is present at threonine 23. Cysteines 78 and 126 form a disulfide.

The protein belongs to the IL-2 family.

Its subcellular location is the secreted. In terms of biological role, cytokine produced by activated CD4-positive helper T-cells and to a lesser extend activated CD8-positive T-cells and natural killer (NK) cells that plays pivotal roles in the immune response and tolerance. Binds to a receptor complex composed of either the high-affinity trimeric IL-2R (IL2RA/CD25, IL2RB/CD122 and IL2RG/CD132) or the low-affinity dimeric IL-2R (IL2RB and IL2RG). Interaction with the receptor leads to oligomerization and conformation changes in the IL-2R subunits resulting in downstream signaling starting with phosphorylation of JAK1 and JAK3. In turn, JAK1 and JAK3 phosphorylate the receptor to form a docking site leading to the phosphorylation of several substrates including STAT5. This process leads to activation of several pathways including STAT, phosphoinositide-3-kinase/PI3K and mitogen-activated protein kinase/MAPK pathways. Functions as a T-cell growth factor and can increase NK-cell cytolytic activity as well. Promotes strong proliferation of activated B-cells and subsequently immunoglobulin production. Plays a pivotal role in regulating the adaptive immune system by controlling the survival and proliferation of regulatory T-cells, which are required for the maintenance of immune tolerance. Moreover, participates in the differentiation and homeostasis of effector T-cell subsets, including Th1, Th2, Th17 as well as memory CD8-positive T-cells. This is Interleukin-2 (IL2) from Orcinus orca (Killer whale).